The primary structure comprises 377 residues: Chaperone protein DnaJ (377 aa).

In terms of domain architecture, J spans 5–70 (DYYEVLGVGK…EKKAAYDQYG (66 aa)). The CR-type zinc-finger motif lies at 137-215 (GHEAQIRVPH…CHGQGKLKSQ (79 aa)). Residues Cys150, Cys153, Cys167, Cys170, Cys189, Cys192, Cys203, and Cys206 each contribute to the Zn(2+) site. CXXCXGXG motif repeat units lie at residues 150–157 (CDHCHGNG), 167–174 (CPTCHGAG), 189–196 (CPKCHGSG), and 203–210 (CTKCHGQG).

Belongs to the DnaJ family. In terms of assembly, homodimer. Requires Zn(2+) as cofactor.

It is found in the cytoplasm. Its function is as follows. Participates actively in the response to hyperosmotic and heat shock by preventing the aggregation of stress-denatured proteins and by disaggregating proteins, also in an autonomous, DnaK-independent fashion. Unfolded proteins bind initially to DnaJ; upon interaction with the DnaJ-bound protein, DnaK hydrolyzes its bound ATP, resulting in the formation of a stable complex. GrpE releases ADP from DnaK; ATP binding to DnaK triggers the release of the substrate protein, thus completing the reaction cycle. Several rounds of ATP-dependent interactions between DnaJ, DnaK and GrpE are required for fully efficient folding. Also involved, together with DnaK and GrpE, in the DNA replication of plasmids through activation of initiation proteins. The protein is Chaperone protein DnaJ of Cupriavidus taiwanensis (strain DSM 17343 / BCRC 17206 / CCUG 44338 / CIP 107171 / LMG 19424 / R1) (Ralstonia taiwanensis (strain LMG 19424)).